A 215-amino-acid polypeptide reads, in one-letter code: Somatotropin (215 aa).

An N-terminal signal peptide occupies residues 1-25 (MAPGMRVCLLLLIAFTLLGPQRAAA). Residue histidine 44 participates in Zn(2+) binding. Serine 130 is modified (phosphoserine). Position 197 (glutamate 197) interacts with Zn(2+).

It belongs to the somatotropin/prolactin family.

The protein localises to the secreted. Plays an important role in growth control. Its major role in stimulating body growth is to stimulate the liver and other tissues to secrete IGF1. It stimulates both the differentiation and proliferation of myoblasts. It also stimulates amino acid uptake and protein synthesis in muscle and other tissues. The protein is Somatotropin (GH1) of Monodelphis domestica (Gray short-tailed opossum).